Here is a 645-residue protein sequence, read N- to C-terminus: 1-phosphatidylinositol 4,5-bisphosphate phosphodiesterase zeta-1 (645 aa).

The EF-hand domain occupies 42 to 77 (CHFAHVKRIFKENDRHNQGRITTEDFRTIYRCIVHR). One can recognise a PI-PLC X-box domain in the interval 162–306 (QDMNKPLNDY…LKFKILVKNK (145 aa)). Active-site residues include H177 and H222. The PI-PLC Y-box domain occupies 385-501 (LSDLVIYTKA…GYVLKPDFLR (117 aa)). The C2 domain occupies 501–625 (RDTTLGFNPN…KGYRRVPLFS (125 aa)).

In terms of assembly, interacts via its C2 domain with PtdIns(3)P and, to a lesser extent, PtdIns(5)P in vitro. Ca(2+) serves as cofactor.

It is found in the nucleus. The protein localises to the cytoplasm. Its subcellular location is the perinuclear region. It carries out the reaction a 1,2-diacyl-sn-glycero-3-phospho-(1D-myo-inositol-4,5-bisphosphate) + H2O = 1D-myo-inositol 1,4,5-trisphosphate + a 1,2-diacyl-sn-glycerol + H(+). Its function is as follows. The production of the second messenger molecules diacylglycerol (DAG) and inositol 1,4,5-trisphosphate (IP3) is mediated by activated phosphatidylinositol-specific phospholipase C enzymes. In vitro, hydrolyzes PtdIns(4,5)P2 in a Ca(2+)-dependent manner. Triggers intracellular Ca(2+) oscillations in oocytes solely during M phase and is involved in inducing oocyte activation and initiating embryonic development up to the blastocyst stage. Is therefore a strong candidate for the egg-activating soluble sperm factor that is transferred from the sperm into the egg cytoplasm following gamete membrane fusion. May exert an inhibitory effect on phospholipase-C-coupled processes that depend on calcium ions and protein kinase C, including CFTR trafficking and function. The protein is 1-phosphatidylinositol 4,5-bisphosphate phosphodiesterase zeta-1 of Rattus norvegicus (Rat).